Here is a 407-residue protein sequence, read N- to C-terminus: MKKIALIIGSMIAGGIISAAGFTWFAKEEPPAEKTSTAERKVLFWYDPMYPNTRFDKPGKSPFMDMDLVPKYADEESSASGVRIDPTQTQNLGVKTATVTRGPLTFSQSFPANVSYNEYQYAIVQARAAGFIDKVYPLTVGDKVQKGAPLLDLTIPDWVEAQSEYLLLRETGGTATQTEGILERLRLAGMPEADIRRLIATQKIQTRFTLKAPIDGVITAFDLRAGMNIAKDNVVAKIQGMDPVWVTAAIPESIAWLVKDASQFTLTVPARPDKTLTIRKWTLLPGVDAATRTLQLRLEVDNADEALKPGMNAWLQLNTASEPMLLIPSQALIDTGNEQRVITVDADGRFVPKRVAVFQASQGVTALRSGLAEGEKVVSSGLFLIDSEANISGALERMRSESATHAH.

Residues 1-26 (MKKIALIIGSMIAGGIISAAGFTWFA) form the signal peptide.

It belongs to the membrane fusion protein (MFP) (TC 8.A.1) family. In terms of assembly, the cus efflux system is composed of CusA, CusB, CusC and CusF.

Part of a cation efflux system that mediates resistance to copper and silver. This is Cation efflux system protein CusB (cusB) from Escherichia coli O6:H1 (strain CFT073 / ATCC 700928 / UPEC).